A 344-amino-acid chain; its full sequence is Dihydroorotase (344 aa).

Positions 13 and 15 each coordinate Zn(2+). Residues His15–Arg17 and Asn41 contribute to the substrate site. Residues Lys99, His136, and His174 each coordinate Zn(2+). The residue at position 99 (Lys99) is an N6-carboxylysine. A substrate-binding site is contributed by His136. A substrate-binding site is contributed by Leu219. Asp247 contributes to the Zn(2+) binding site. Residue Asp247 is part of the active site. 2 residues coordinate substrate: His251 and Ala263.

The protein belongs to the metallo-dependent hydrolases superfamily. DHOase family. Class II DHOase subfamily. In terms of assembly, homodimer. It depends on Zn(2+) as a cofactor.

The catalysed reaction is (S)-dihydroorotate + H2O = N-carbamoyl-L-aspartate + H(+). The protein operates within pyrimidine metabolism; UMP biosynthesis via de novo pathway; (S)-dihydroorotate from bicarbonate: step 3/3. In terms of biological role, catalyzes the reversible cyclization of carbamoyl aspartate to dihydroorotate. The sequence is that of Dihydroorotase from Acinetobacter baumannii (strain SDF).